Consider the following 96-residue polypeptide: Bublin coiled-coil protein (96 aa).

The stretch at 39–79 forms a coiled coil; that stretch reads NSCLDDIEDRNDALNGKLHELLESNRQARKDFRQQLNDEEA. The disordered stretch occupies residues 63–96; the sequence is NRQARKDFRQQLNDEEASPPPAEDPASRDTQTED. Over residues 87–96 the composition is skewed to basic and acidic residues; it reads PASRDTQTED.

The protein belongs to the UPF0184 (EST00098) family.

Its subcellular location is the cell junction. The protein localises to the cytoplasm. It is found in the cytoskeleton. Functionally, essential for intermediate filament organization in intestinal cells, interacts with intermediate filament and regulates intestinal lumen morphology. This chain is Bublin coiled-coil protein (bbln), found in Ctenopharyngodon idella (Grass carp).